A 60-amino-acid chain; its full sequence is MARYRHSRSRSRSRYRRRRRRRSRYRSQRRRYRGRRRRRSRRGRRRGYSRRRYSRRRRRY.

A disordered region spans residues 1-60; that stretch reads MARYRHSRSRSRSRYRRRRRRRSRYRSQRRRYRGRRRRRSRRGRRRGYSRRRYSRRRRRY.

Belongs to the protamine P1 family. As to expression, testis.

It is found in the nucleus. The protein localises to the chromosome. Protamines substitute for histones in the chromatin of sperm during the haploid phase of spermatogenesis. They compact sperm DNA into a highly condensed, stable and inactive complex. The polypeptide is Sperm protamine P1 (PRM1) (Osphranter rufus (Red kangaroo)).